The following is a 156-amino-acid chain: Small ribosomal subunit protein uS7c (156 aa).

It belongs to the universal ribosomal protein uS7 family. Part of the 30S ribosomal subunit.

It is found in the plastid. Its subcellular location is the chloroplast. Functionally, one of the primary rRNA binding proteins, it binds directly to 16S rRNA where it nucleates assembly of the head domain of the 30S subunit. The protein is Small ribosomal subunit protein uS7c (rps7) of Ostreococcus tauri.